We begin with the raw amino-acid sequence, 720 residues long: Engulfment and cell motility protein 3 (720 aa).

The ELMO domain maps to 307–479; that stretch reads EQREQLQALR…VVREQLARTL (173 aa). Residues 541–663 form the PH domain; it reads LRLCEGMLFR…WTDGLSALLG (123 aa).

As to quaternary structure, probably interacts directly with the SH3-domain of DOCK1 via its SH3-binding site. Part of a complex with DOCK1 and RAC1. Interacts with ADGRB3.

The protein localises to the cytoplasm. Involved in cytoskeletal rearrangements required for phagocytosis of apoptotic cells and cell motility. Acts in association with DOCK1 and CRK. Was initially proposed to be required in complex with DOCK1 to activate Rac Rho small GTPases. May enhance the guanine nucleotide exchange factor (GEF) activity of DOCK1. The sequence is that of Engulfment and cell motility protein 3 (Elmo3) from Rattus norvegicus (Rat).